Consider the following 813-residue polypeptide: Putative ATPase, plasma membrane-like (813 aa).

The Cytoplasmic segment spans residues Met1–Phe66. The chain crosses the membrane as a helical span at residues Phe67–Met86. At Leu87–Arg94 the chain is on the extracellular side. The helical transmembrane segment at Gln95 to Glu115 threads the bilayer. At Asp116 to Ile245 the chain is on the cytoplasmic side. A helical transmembrane segment spans residues Glu246 to Trp266. Residues Ile267 to Val275 lie on the Extracellular side of the membrane. A helical transmembrane segment spans residues Ile276–Thr293. Over Val294–Lys555 the chain is Cytoplasmic. Asp331 (4-aspartylphosphate intermediate) is an active-site residue. Mg(2+)-binding residues include Asp500 and Asp504. The helical transmembrane segment at His556–Leu577 threads the bilayer. Over Ile578–Asp582 the chain is Extracellular. Residues Phe583–Asp605 traverse the membrane as a helical segment. The Cytoplasmic segment spans residues Asn606–Ile622. The helical transmembrane segment at Phe623–Ala643 threads the bilayer. The Extracellular portion of the chain corresponds to Ala644–Ala664. The chain crosses the membrane as a helical span at residues Glu665–Ile685. Residues Gln686–Gly697 lie on the Cytoplasmic side of the membrane. Residues Glu698 to Ala718 form a helical membrane-spanning segment. The Extracellular segment spans residues Ser719–Glu726. The helical transmembrane segment at Gly727–Leu747 threads the bilayer. Residues Asp748 to Val813 lie on the Cytoplasmic side of the membrane. Residue Ser776 is modified to Phosphoserine.

Belongs to the cation transport ATPase (P-type) (TC 3.A.3) family. Type IIIA subfamily.

The protein resides in the membrane. This chain is Putative ATPase, plasma membrane-like, found in Arabidopsis thaliana (Mouse-ear cress).